We begin with the raw amino-acid sequence, 95 residues long: Putative pterin-4-alpha-carbinolamine dehydratase (95 aa).

It belongs to the pterin-4-alpha-carbinolamine dehydratase family.

It catalyses the reaction (4aS,6R)-4a-hydroxy-L-erythro-5,6,7,8-tetrahydrobiopterin = (6R)-L-erythro-6,7-dihydrobiopterin + H2O. In Solibacter usitatus (strain Ellin6076), this protein is Putative pterin-4-alpha-carbinolamine dehydratase.